We begin with the raw amino-acid sequence, 238 residues long: COMM domain-containing protein 10 homolog Vlet (238 aa).

Low complexity predominate over residues 43 to 77 (ASASATSSTVGTSVTTTGRVDSSTEENPTSNTEPE). A disordered region spans residues 43–78 (ASASATSSTVGTSVTTTGRVDSSTEENPTSNTEPEY). Residues 161-225 (VIEDVAWKLN…SIQGELDAML (65 aa)) enclose the COMM domain.

Belongs to the COMM domain-containing protein 10 family. Component of the commander complex consisting of the CCC subcomplex and the retriever subcomplex. Component of the CCC subcomplex. Interacts with Smn; along with Sbat and Hez may form an accessory subcomplex involved in SMN complex function.

Scaffold protein in the commander complex that is essential for endosomal recycling of transmembrane cargos; the commander complex is composed of the CCC subcomplex and the retriever subcomplex. May modulate activity of cullin-RING E3 ubiquitin ligase (CRL) complexes. May down-regulate activation of NF-kappa-B. May have an accessory function in the survival motor neuron (SMN) complex. Required for neuromuscular function and organismal viability. The polypeptide is COMM domain-containing protein 10 homolog Vlet (Drosophila melanogaster (Fruit fly)).